A 256-amino-acid polypeptide reads, in one-letter code: Major prion protein (256 aa).

The signal sequence occupies residues 1–24 (MVKSHIGSWILVLFVAMWSDVGLC). An interaction with GRB2, ERI3 and SYN1 region spans residues 25-233 (KKRPKPGGGW…ESQAYYQRGA (209 aa)). Positions 28–110 (PKPGGGWNTG…QWNKPSKPKT (83 aa)) are disordered. 5 tandem repeats follow at residues 54 to 62 (PQGGGGWGQ), 63 to 70 (PHGGGWGQ), 71 to 78 (PHGGGWGQ), 79 to 86 (PHGGGWGQ), and 87 to 95 (PHGGGGWGQ). Residues 54 to 95 (PQGGGGWGQPHGGGWGQPHGGGWGQPHGGGWGQPHGGGGWGQ) are 5 X 8 AA tandem repeats of P-H-G-G-G-W-G-Q. Residues 55 to 97 (QGGGGWGQPHGGGWGQPHGGGWGQPHGGGWGQPHGGGGWGQGG) show a composition bias toward gly residues. 12 residues coordinate Cu(2+): histidine 64, glycine 65, glycine 66, histidine 72, glycine 73, glycine 74, histidine 80, glycine 81, glycine 82, histidine 88, glycine 90, and glycine 91. Cysteines 182 and 217 form a disulfide. N-linked (GlcNAc...) asparagine glycans are attached at residues asparagine 184 and asparagine 200. Alanine 233 is lipidated: GPI-anchor amidated alanine. The propeptide at 234-256 (SVILFSSPPVILLISFLIFLIVG) is removed in mature form.

Belongs to the prion family. As to quaternary structure, monomer and homodimer. Has a tendency to aggregate into amyloid fibrils containing a cross-beta spine, formed by a steric zipper of superposed beta-strands. Soluble oligomers may represent an intermediate stage on the path to fibril formation. Copper binding may promote oligomerization. Interacts with GRB2, APP, ERI3/PRNPIP and SYN1. Mislocalized cytosolically exposed PrP interacts with MGRN1; this interaction alters MGRN1 subcellular location and causes lysosomal enlargement. Interacts with KIAA1191.

The protein resides in the cell membrane. Its subcellular location is the golgi apparatus. Its function is as follows. Its primary physiological function is unclear. Has cytoprotective activity against internal or environmental stresses. May play a role in neuronal development and synaptic plasticity. May be required for neuronal myelin sheath maintenance. May play a role in iron uptake and iron homeostasis. Soluble oligomers are toxic to cultured neuroblastoma cells and induce apoptosis (in vitro). Association with GPC1 (via its heparan sulfate chains) targets PRNP to lipid rafts. Also provides Cu(2+) or Zn(2+) for the ascorbate-mediated GPC1 deaminase degradation of its heparan sulfate side chains. This is Major prion protein (PRNP) from Odocoileus hemionus (Mule deer).